The sequence spans 720 residues: Inactive serine protease PAMR1 (720 aa).

The signal sequence occupies residues 1-21; that stretch reads MELGCWTQLGLTFLQLLLISS. 9 disulfides stabilise this stretch: C128–C150, C177–C199, C239–C250, C244–C260, C262–C271, C280–C329, C315–C342, C414–C442, and C489–C505. A CUB domain is found at 128-236; that stretch reads CGQVLRAPKG…DGFHAIYEEI (109 aa). The 38-residue stretch at 235–272 folds into the EGF-like domain; the sequence is EITACSSSPCFHDGTCVLDKAGSYKCACLAGYTGQRCE. Sushi domains follow at residues 278–344 and 387–444; these read RNCS…ICIK and APTK…SCIP. Residues 445–720 form the Peptidase S1 domain; sequence ICGKIENITA…FKDWIERNMK (276 aa). N-linked (GlcNAc...) asparagine glycosylation occurs at N614. 2 cysteine pairs are disulfide-bonded: C630–C649 and C661–C697.

This sequence belongs to the peptidase S1 family.

The protein localises to the secreted. May play a role in regeneration of skeletal muscle. The protein is Inactive serine protease PAMR1 (PAMR1) of Homo sapiens (Human).